The primary structure comprises 161 residues: RNA pyrophosphohydrolase (161 aa).

A Nudix hydrolase domain is found at 12-154 (PYRPGVGMMI…KRKLYQAVVK (143 aa)). The Nudix box signature appears at 46-67 (GGIVPGETPSIAAMREMLEEIG).

Belongs to the Nudix hydrolase family. RppH subfamily. The cofactor is a divalent metal cation.

Functionally, accelerates the degradation of transcripts by removing pyrophosphate from the 5'-end of triphosphorylated RNA, leading to a more labile monophosphorylated state that can stimulate subsequent ribonuclease cleavage. The chain is RNA pyrophosphohydrolase from Rickettsia bellii (strain OSU 85-389).